The following is a 673-amino-acid chain: UvrABC system protein B (673 aa).

The region spanning 26-415 (EGLEDGLAHQ…GDVVDQVVRP (390 aa)) is the Helicase ATP-binding domain. Residue 39-46 (GVTGSGKT) participates in ATP binding. The Beta-hairpin motif lies at 92–115 (YYDYYQPEAYVPSSDTFIEKDASV). The 167-residue stretch at 431–597 (QVDDLLSEIR…GLNKKVVDIL (167 aa)) folds into the Helicase C-terminal domain. The tract at residues 608–627 (AKGRGKSRPIVEPDNVPMDM) is disordered. Residues 633–668 (QQKIHELEGLMMQHAQNLEFEEAAQIRDQLHQLREL) form the UVR domain.

This sequence belongs to the UvrB family. Forms a heterotetramer with UvrA during the search for lesions. Interacts with UvrC in an incision complex.

It localises to the cytoplasm. Functionally, the UvrABC repair system catalyzes the recognition and processing of DNA lesions. A damage recognition complex composed of 2 UvrA and 2 UvrB subunits scans DNA for abnormalities. Upon binding of the UvrA(2)B(2) complex to a putative damaged site, the DNA wraps around one UvrB monomer. DNA wrap is dependent on ATP binding by UvrB and probably causes local melting of the DNA helix, facilitating insertion of UvrB beta-hairpin between the DNA strands. Then UvrB probes one DNA strand for the presence of a lesion. If a lesion is found the UvrA subunits dissociate and the UvrB-DNA preincision complex is formed. This complex is subsequently bound by UvrC and the second UvrB is released. If no lesion is found, the DNA wraps around the other UvrB subunit that will check the other stand for damage. The chain is UvrABC system protein B from Escherichia coli O6:H1 (strain CFT073 / ATCC 700928 / UPEC).